Here is a 319-residue protein sequence, read N- to C-terminus: Ficolin-2 (319 aa).

The signal sequence occupies residues 1–22 (MVLGSAALFVLSLCVTELTLHA). Residues 45–101 (GCPGLPGALGPKGEAGAKGDRGESGLPGHPGKAGPTGPKGDRGEKGVRGEKGDTGPS) enclose the Collagen-like domain. A disordered region spans residues 53–106 (LGPKGEAGAKGDRGESGLPGHPGKAGPTGPKGDRGEKGVRGEKGDTGPSQSCAT). The segment covering 83 to 97 (KGDRGEKGVRGEKGD) has biased composition (basic and acidic residues). Residues 102-319 (QSCATGPRTC…KVSEMKVRLI (218 aa)) enclose the Fibrinogen C-terminal domain. Disulfide bonds link Cys104/Cys132 and Cys111/Cys139. Ca(2+) contacts are provided by Asp255, Asp257, and Ser261. The cysteines at positions 263 and 276 are disulfide-linked. The N-linked (GlcNAc...) asparagine glycan is linked to Asn306.

Belongs to the ficolin lectin family. As to quaternary structure, homotrimer. Interacts with elastin. Interacts with MASP1 and MASP2.

The protein localises to the secreted. Its function is as follows. May function in innate immunity through activation of the lectin complement pathway. Calcium-dependent and GlcNAc-binding lectin. In Rattus norvegicus (Rat), this protein is Ficolin-2 (Fcn2).